The primary structure comprises 601 residues: Elongation factor 4 (601 aa).

The tr-type G domain maps to 5–187 (EHIRNFSIIA…AIVERLPAPE (183 aa)). Residues 17 to 22 (DHGKST) and 134 to 137 (NKID) each bind GTP.

It belongs to the TRAFAC class translation factor GTPase superfamily. Classic translation factor GTPase family. LepA subfamily.

It localises to the cell inner membrane. It carries out the reaction GTP + H2O = GDP + phosphate + H(+). In terms of biological role, required for accurate and efficient protein synthesis under certain stress conditions. May act as a fidelity factor of the translation reaction, by catalyzing a one-codon backward translocation of tRNAs on improperly translocated ribosomes. Back-translocation proceeds from a post-translocation (POST) complex to a pre-translocation (PRE) complex, thus giving elongation factor G a second chance to translocate the tRNAs correctly. Binds to ribosomes in a GTP-dependent manner. The chain is Elongation factor 4 from Nitratidesulfovibrio vulgaris (strain ATCC 29579 / DSM 644 / CCUG 34227 / NCIMB 8303 / VKM B-1760 / Hildenborough) (Desulfovibrio vulgaris).